An 841-amino-acid polypeptide reads, in one-letter code: Formin-like protein 10 (841 aa).

The first 25 residues, 1–25 (MDGLCYVIFIIFSLLSCAFSPLSYA), serve as a signal peptide directing secretion. Residues 102 to 122 (LIPAISAVLAAATLIALAFFF) traverse the membrane as a helical segment. 3 disordered regions span residues 137–166 (SKSLASDISQSQQQTLPCPPPRNNNTQNKL), 254–297 (ISSH…RTVR), and 403–512 (KSSW…SKQR). The segment covering 139 to 152 (SLASDISQSQQQTL) has biased composition (polar residues). The segment covering 254-278 (ISSHSDSPAMSPSAAMSPPMNSTAP) has biased composition (low complexity). The segment covering 279 to 293 (HWSTNQNTHSPSSPE) has biased composition (polar residues). Positions 426 to 444 (LPPPQRPPPAMPEPPPLVP) are enriched in pro residues. The FH2 domain occupies 469 to 841 (EGTTDRPKPK…KKMEVTSSLA (373 aa)). Positions 502 to 512 (YNSSNANSKQR) are enriched in polar residues.

The protein belongs to the formin-like family. Class-I subfamily.

The protein resides in the membrane. In terms of biological role, might be involved in the organization and polarity of the actin cytoskeleton. This is Formin-like protein 10 (FH10) from Arabidopsis thaliana (Mouse-ear cress).